A 362-amino-acid chain; its full sequence is Peptide chain release factor 1 (362 aa).

Residue Gln232 is modified to N5-methylglutamine.

The protein belongs to the prokaryotic/mitochondrial release factor family. In terms of processing, methylated by PrmC. Methylation increases the termination efficiency of RF1.

It localises to the cytoplasm. Functionally, peptide chain release factor 1 directs the termination of translation in response to the peptide chain termination codons UAG and UAA. The protein is Peptide chain release factor 1 of Myxococcus xanthus.